The chain runs to 668 residues: Ankyrin repeat domain-containing protein OPG023 (668 aa).

ANK repeat units lie at residues phenylalanine 31 to lysine 64, asparagine 101 to valine 131, lysine 135 to tyrosine 166, tyrosine 199 to serine 231, asparagine 235 to tyrosine 266, arginine 277 to isoleucine 311, asparagine 334 to lysine 368, arginine 458 to isoleucine 487, and asparagine 491 to cysteine 521. Residues glycine 586 to glutamate 666 form a PRANC/F-box-like region.

It belongs to the orthopoxvirus OPG023 family. As to quaternary structure, interacts (via N-terminus) with host RELA. Interacts (via PRANC/F-box-like domain) with the SKP1 component of the host SCF ubiquitin ligase complex.

Its function is as follows. Substrate-specific adapter of SKP1-containing E3 ubiquitin-protein ligases which mediate the ubiquitination and subsequent proteasomal degradation of host target proteins. Prevents activation and subsequent nuclear localization of NF-kappa-B in infected cells, by targeting NF-kappa-B RELA subunit to the SCF E3 ligase complex. This is Ankyrin repeat domain-containing protein OPG023 (OPG023) from Bos taurus (Bovine).